We begin with the raw amino-acid sequence, 474 residues long: Na(+)/H(+) antiporter NhaA 3 (474 aa).

11 helical membrane-spanning segments follow: residues 31-51 (VGGV…NIPA), 73-93 (LSVA…VAGI), 110-130 (AALP…VYTV), 141-161 (GWAV…AVIG), 171-191 (FLLT…AVFF), 194-214 (TLNF…WLLL), 220-240 (GWYV…NSGV), 280-300 (LAVP…GALA), 309-329 (LGVV…GTWL), 347-367 (VFAV…IGEL), and 378-398 (EVKA…TVLL).

Belongs to the NhaA Na(+)/H(+) (TC 2.A.33) antiporter family.

The protein localises to the cell membrane. The catalysed reaction is Na(+)(in) + 2 H(+)(out) = Na(+)(out) + 2 H(+)(in). In terms of biological role, na(+)/H(+) antiporter that extrudes sodium in exchange for external protons. In Streptomyces coelicolor (strain ATCC BAA-471 / A3(2) / M145), this protein is Na(+)/H(+) antiporter NhaA 3.